We begin with the raw amino-acid sequence, 544 residues long: Chaperonin GroEL (544 aa).

Residues Thr-30–Pro-33, Lys-51, Asp-87–Thr-91, Gly-415, Asn-479–Ala-481, and Asp-495 contribute to the ATP site.

This sequence belongs to the chaperonin (HSP60) family. As to quaternary structure, forms a cylinder of 14 subunits composed of two heptameric rings stacked back-to-back. Interacts with the co-chaperonin GroES.

It localises to the cytoplasm. It catalyses the reaction ATP + H2O + a folded polypeptide = ADP + phosphate + an unfolded polypeptide.. Together with its co-chaperonin GroES, plays an essential role in assisting protein folding. The GroEL-GroES system forms a nano-cage that allows encapsulation of the non-native substrate proteins and provides a physical environment optimized to promote and accelerate protein folding. This chain is Chaperonin GroEL, found in Acinetobacter baylyi (strain ATCC 33305 / BD413 / ADP1).